A 249-amino-acid chain; its full sequence is Tetraspanin-7 (249 aa).

Residues 1-16 (MASRRMETKPVITCLK) lie on the Cytoplasmic side of the membrane. A helical transmembrane segment spans residues 17–40 (TLLIIYSFVFWITGVILLAVGVWG). Residues 41-56 (KLTLGTYISLIAENST) are Extracellular-facing. Asn54 carries an N-linked (GlcNAc...) asparagine glycan. The chain crosses the membrane as a helical span at residues 57–75 (NAPYVLIGTGTTIVVFGLF). Residues 76–86 (GCFATCRGSPW) lie on the Cytoplasmic side of the membrane. The helical transmembrane segment at 87–112 (MLKLYAMFLSLVFLAELVAGISGFVF) threads the bilayer. At 113-213 (RHEIKDTFLR…LVTSFMETNM (101 aa)) the chain is on the extracellular side. N-linked (GlcNAc...) asparagine glycans are attached at residues Asn155, Asn158, Asn177, and Asn188. Residues 214-234 (GIIAGVAFGIAFSQLIGMLLA) traverse the membrane as a helical segment. Over 235-249 (CCLSRFITANQYEMV) the chain is Cytoplasmic.

The protein belongs to the tetraspanin (TM4SF) family. In terms of assembly, (Microbial infection) Interacts with herpes simplex virus 1 (HHV-1) UL35. Not solely expressed in T-cells. Expressed in acute myelocytic leukemia cells of some patients.

It is found in the membrane. Its function is as follows. May be involved in cell proliferation and cell motility. This chain is Tetraspanin-7 (TSPAN7), found in Homo sapiens (Human).